Consider the following 116-residue polypeptide: Large ribosomal subunit protein bL17 (116 aa).

It belongs to the bacterial ribosomal protein bL17 family. Part of the 50S ribosomal subunit. Contacts protein L32.

This is Large ribosomal subunit protein bL17 from Fusobacterium nucleatum subsp. nucleatum (strain ATCC 25586 / DSM 15643 / BCRC 10681 / CIP 101130 / JCM 8532 / KCTC 2640 / LMG 13131 / VPI 4355).